The following is a 762-amino-acid chain: Homeobox-leucine zipper protein MERISTEM L1 (762 aa).

Residues 13–72 form a disordered region; the sequence is MFDMTPKNSENDLGITGSHEEDFETKSGAEVTMENPLEEELQDPNQRPNKKKRYHRHTQR. Over residues 30–39 the composition is skewed to basic and acidic residues; sequence SHEEDFETKS. The segment covering 60 to 71 has biased composition (basic residues); it reads PNKKKRYHRHTQ. Positions 62 to 121 form a DNA-binding region, homeobox; it reads KKKRYHRHTQRQIQELESFFKECPHPDDKQRKELSRELSLEPLQVKFWFQNKRTQMKAQH. Residues 110–192 adopt a coiled-coil conformation; that stretch reads FQNKRTQMKA…DRISAIAAKY (83 aa). The 232-residue stretch at 253–484 folds into the START domain; it reads SEADKPMIVE…LDRQCERLAS (232 aa).

The protein belongs to the HD-ZIP homeobox family. Class IV subfamily. Interacts with GAI/RGA2, RGA/RGA1/GRS, RGL2/SCL19 and PDF2. Interacts with AIL7/PLT7, ANT, BBM and AIL1.

Its subcellular location is the nucleus. Functionally, probable transcription factor involved in cell specification and pattern formation during embryogenesis. Binds to the L1 box DNA sequence 5'-TAAATG[CT]A-3'. Plays a role in maintaining the identity of L1 cells, possibly by interacting with their L1 box or other target-gene promoters; binds to the LIP1 gene promoter and stimulates its expression upon imbibition. Acts as a positive regulator of gibberellins (GAs)-regulated epidermal gene expression (e.g. LIP1, LIP2, LTP1, FDH and PDF1). Functionally redundant to PDF2. Seems to promote cell differentiation. The sequence is that of Homeobox-leucine zipper protein MERISTEM L1 from Arabidopsis thaliana (Mouse-ear cress).